Consider the following 282-residue polypeptide: Probable endonuclease 4 (282 aa).

Residues His-69, His-109, Glu-145, Asp-179, His-182, His-216, Asp-229, His-231, and Glu-261 each coordinate Zn(2+).

This sequence belongs to the AP endonuclease 2 family. It depends on Zn(2+) as a cofactor.

The enzyme catalyses Endonucleolytic cleavage to 5'-phosphooligonucleotide end-products.. Endonuclease IV plays a role in DNA repair. It cleaves phosphodiester bonds at apurinic or apyrimidinic (AP) sites, generating a 3'-hydroxyl group and a 5'-terminal sugar phosphate. The polypeptide is Probable endonuclease 4 (Campylobacter fetus subsp. fetus (strain 82-40)).